Reading from the N-terminus, the 576-residue chain is Urease subunit alpha (576 aa).

The Urease domain occupies 132 to 576 (GGVDTHIHFI…LPMAQRYFLF (445 aa)). Residues His137, His139, and Lys220 each contribute to the Ni(2+) site. Residue Lys220 is modified to N6-carboxylysine. His222 contributes to the substrate binding site. Ni(2+) is bound by residues His249 and His275. His323 acts as the Proton donor in catalysis. Ni(2+) is bound at residue Asp363.

Belongs to the metallo-dependent hydrolases superfamily. Urease alpha subunit family. As to quaternary structure, heterotrimer of UreA (gamma), UreB (beta) and UreC (alpha) subunits. Three heterotrimers associate to form the active enzyme. The cofactor is Ni cation. In terms of processing, carboxylation allows a single lysine to coordinate two nickel ions.

It localises to the cytoplasm. The catalysed reaction is urea + 2 H2O + H(+) = hydrogencarbonate + 2 NH4(+). The protein operates within nitrogen metabolism; urea degradation; CO(2) and NH(3) from urea (urease route): step 1/1. The protein is Urease subunit alpha of Arthrobacter sp. (strain FB24).